The following is a 42-amino-acid chain: Photosystem I reaction center subunit IX (42 aa).

Residues 7–27 (YLSTAPVLAAIWFGILAGLLI) traverse the membrane as a helical segment.

This sequence belongs to the PsaJ family.

Its subcellular location is the plastid. The protein resides in the chloroplast thylakoid membrane. Functionally, may help in the organization of the PsaE and PsaF subunits. The polypeptide is Photosystem I reaction center subunit IX (Staurastrum punctulatum (Green alga)).